A 337-amino-acid polypeptide reads, in one-letter code: Glyceraldehyde-3-phosphate dehydrogenase 3, cytosolic (337 aa).

Residues 1–151 (MAKIKIGING…YKSDINIVSN (151 aa)) form a binding to NAD region. Residues 13-14 (RI), Asp-35, and Arg-82 each bind NAD(+). Residues 152–337 (ASCTTNCLAP…DLIRHMNSTK (186 aa)) form a catalytic region. D-glyceraldehyde 3-phosphate contacts are provided by residues 153-155 (SCT), Thr-184, 213-214 (TG), and Arg-236. The active-site Nucleophile is the Cys-154. Residue Asn-318 participates in NAD(+) binding.

This sequence belongs to the glyceraldehyde-3-phosphate dehydrogenase family. In terms of assembly, homotetramer.

The protein localises to the cytoplasm. It carries out the reaction D-glyceraldehyde 3-phosphate + phosphate + NAD(+) = (2R)-3-phospho-glyceroyl phosphate + NADH + H(+). It functions in the pathway carbohydrate degradation; glycolysis; pyruvate from D-glyceraldehyde 3-phosphate: step 1/5. In terms of biological role, key enzyme in glycolysis that catalyzes the first step of the pathway by converting D-glyceraldehyde 3-phosphate (G3P) into 3-phospho-D-glyceroyl phosphate. Essential for the maintenance of cellular ATP levels and carbohydrate metabolism. In Zea mays (Maize), this protein is Glyceraldehyde-3-phosphate dehydrogenase 3, cytosolic (GAPC3).